A 376-amino-acid polypeptide reads, in one-letter code: Protein-arginine rhamnosyltransferase (376 aa).

DTDP-beta-L-rhamnose is bound by residues 13 to 16, tyrosine 192, 252 to 254, and 270 to 274; these read NYGD, MAQ, and RGEDS. Residue 14–15 coordinates dTDP; the sequence is YG. Residue aspartate 16 is the Proton acceptor of the active site. DTDP-binding positions include tyrosine 192, 252 to 254, and 270 to 274; these read MAQ and RGEDS. Residue glutamate 272 is part of the active site.

Belongs to the glycosyltransferase 104 family.

The catalysed reaction is dTDP-beta-L-rhamnose + L-arginyl-[protein] = N(omega)-(alpha-L-rhamnosyl)-L-arginyl-[protein] + dTDP + H(+). In terms of biological role, protein-arginine rhamnosyltransferase that catalyzes the transfer of a single rhamnose to elongation factor P (EF-P) on 'Lys-32', a modification required for EF-P-dependent rescue of polyproline stalled ribosomes. The chain is Protein-arginine rhamnosyltransferase from Pseudomonas aeruginosa (strain ATCC 15692 / DSM 22644 / CIP 104116 / JCM 14847 / LMG 12228 / 1C / PRS 101 / PAO1).